Here is an 876-residue protein sequence, read N- to C-terminus: Extended synaptotagmin-2-B (876 aa).

The tract at residues 1–21 (MASESGAEKGPPTTPAENGQP) is disordered. The Cytoplasmic portion of the chain corresponds to 1 to 35 (MASESGAEKGPPTTPAENGQPGVPIAAAVAADEQG). Residues 36 to 56 (MISVDIAGLFYQFSKTFILIF) form a helical membrane-spanning segment. The Lumenal segment spans residues 57–59 (PVY). Residues 60-80 (VLGYFGLSFSWLLIALVLLLW) traverse the membrane as a helical segment. Residues 81–876 (WRRNKGNKNS…EDGTRAAASS (796 aa)) are Cytoplasmic-facing. Positions 123 to 302 (DIERAEWLNK…LPNRITVPLV (180 aa)) constitute an SMP-LTD domain. C2 domains lie at 301–421 (LVSD…DEWF) and 446–592 (NLDQ…HLNN). Residues K332, D333, D345, D392, E393, D394, D396, D398, and D399 each contribute to the Ca(2+) site. Positions 614–714 (VRSPDEQHTS…KEPTPSIASD (101 aa)) are disordered. Positions 636–656 (PPTPQMPAPSPAVAHKPPPTP) are enriched in pro residues. Positions 686 to 698 (SSSSLSGSSFTYS) are enriched in low complexity. The C2 3 domain occupies 741–863 (PLGQIQLTIR…DAAKGWTQWF (123 aa)). Residues 788 to 795 (KRRSGRRK) form a required for phosphatidylinositol 4,5-bisphosphate-dependent location at the cell membrane region.

The protein belongs to the extended synaptotagmin family. Interacts with fgfr1 that has been activated by fgf1 binding. Interacts (via C2 domains) with the AP-2 complex (via an alpha subunit). Identified in a complex with the AP-2 complex and fgfr1.

It is found in the cell membrane. The protein resides in the endoplasmic reticulum membrane. Its function is as follows. Tethers the endoplasmic reticulum to the cell membrane and promotes the formation of appositions between the endoplasmic reticulum and the cell membrane. Binds glycerophospholipids in a barrel-like domain and may play a role in cellular lipid transport. Plays a role in the rapid internalization of fgfr1 that has been activated by fgf1 binding; this occurs most likely via the AP-2 complex. Required for normal fgf signaling and the activation of downstream signaling cascades via its role in the internalization of activated fgfr1. Required for normal embryonic development via its role in fgf signaling and the downstream regulation of t/xBRA expression. This chain is Extended synaptotagmin-2-B (esyt2-b), found in Xenopus laevis (African clawed frog).